We begin with the raw amino-acid sequence, 184 residues long: ATP synthase subunit b, chloroplastic (184 aa).

Residues 27–49 (LATNLINLSVVFGVLIFFGKGVL) form a helical membrane-spanning segment.

Belongs to the ATPase B chain family. F-type ATPases have 2 components, F(1) - the catalytic core - and F(0) - the membrane proton channel. F(1) has five subunits: alpha(3), beta(3), gamma(1), delta(1), epsilon(1). F(0) has four main subunits: a(1), b(1), b'(1) and c(10-14). The alpha and beta chains form an alternating ring which encloses part of the gamma chain. F(1) is attached to F(0) by a central stalk formed by the gamma and epsilon chains, while a peripheral stalk is formed by the delta, b and b' chains.

Its subcellular location is the plastid. It localises to the chloroplast thylakoid membrane. In terms of biological role, f(1)F(0) ATP synthase produces ATP from ADP in the presence of a proton or sodium gradient. F-type ATPases consist of two structural domains, F(1) containing the extramembraneous catalytic core and F(0) containing the membrane proton channel, linked together by a central stalk and a peripheral stalk. During catalysis, ATP synthesis in the catalytic domain of F(1) is coupled via a rotary mechanism of the central stalk subunits to proton translocation. Functionally, component of the F(0) channel, it forms part of the peripheral stalk, linking F(1) to F(0). The sequence is that of ATP synthase subunit b, chloroplastic from Aethionema cordifolium (Lebanon stonecress).